Reading from the N-terminus, the 320-residue chain is Ferrochelatase (320 aa).

2 residues coordinate Fe cation: histidine 194 and glutamate 275.

Belongs to the ferrochelatase family. In terms of assembly, monomer.

It localises to the cytoplasm. It carries out the reaction heme b + 2 H(+) = protoporphyrin IX + Fe(2+). It functions in the pathway porphyrin-containing compound metabolism; protoheme biosynthesis; protoheme from protoporphyrin-IX: step 1/1. Catalyzes the ferrous insertion into protoporphyrin IX. The sequence is that of Ferrochelatase from Escherichia coli O9:H4 (strain HS).